Reading from the N-terminus, the 355-residue chain is Elongation factor Ts (355 aa).

The interval 82–85 (TDFV) is involved in Mg(2+) ion dislocation from EF-Tu.

This sequence belongs to the EF-Ts family.

Its subcellular location is the cytoplasm. In terms of biological role, associates with the EF-Tu.GDP complex and induces the exchange of GDP to GTP. It remains bound to the aminoacyl-tRNA.EF-Tu.GTP complex up to the GTP hydrolysis stage on the ribosome. This Helicobacter pylori (strain G27) protein is Elongation factor Ts.